The sequence spans 152 residues: Ribosome maturation factor RimP (152 aa).

Belongs to the RimP family.

The protein localises to the cytoplasm. Functionally, required for maturation of 30S ribosomal subunits. The sequence is that of Ribosome maturation factor RimP from Francisella tularensis subsp. tularensis (strain FSC 198).